A 496-amino-acid polypeptide reads, in one-letter code: Probable cytosol aminopeptidase (496 aa).

Residues lysine 257 and aspartate 262 each contribute to the Mn(2+) site. The active site involves lysine 269. 3 residues coordinate Mn(2+): aspartate 281, aspartate 341, and glutamate 343. Residue arginine 345 is part of the active site.

This sequence belongs to the peptidase M17 family. Mn(2+) serves as cofactor.

It localises to the cytoplasm. The catalysed reaction is Release of an N-terminal amino acid, Xaa-|-Yaa-, in which Xaa is preferably Leu, but may be other amino acids including Pro although not Arg or Lys, and Yaa may be Pro. Amino acid amides and methyl esters are also readily hydrolyzed, but rates on arylamides are exceedingly low.. It carries out the reaction Release of an N-terminal amino acid, preferentially leucine, but not glutamic or aspartic acids.. Its function is as follows. Presumably involved in the processing and regular turnover of intracellular proteins. Catalyzes the removal of unsubstituted N-terminal amino acids from various peptides. This is Probable cytosol aminopeptidase from Synechococcus sp. (strain CC9311).